The following is a 241-amino-acid chain: Platelet-derived growth factor subunit B (241 aa).

Positions 1-20 (MNRCWALFLSLCCYLRLVSA) are cleaved as a signal peptide. Residues 21 to 81 (EGDPIPEELY…ELESLSRGRR (61 aa)) constitute a propeptide, removed in mature form. N-linked (GlcNAc...) asparagine glycosylation is present at asparagine 63. Intrachain disulfides connect cysteine 97–cysteine 141, cysteine 130–cysteine 178, and cysteine 134–cysteine 180. A propeptide spans 191-241 (TPGSSQEQRAARTPQTRVTIRTVRVRRPPKGKHRKFKHTHDKTALKETLGA) (removed in mature form). Residues 217–230 (RPPKGKHRKFKHTH) show a composition bias toward basic residues. A disordered region spans residues 217–241 (RPPKGKHRKFKHTHDKTALKETLGA).

It belongs to the PDGF/VEGF growth factor family. Antiparallel homodimer; disulfide-linked. Antiparallel heterodimer with PDGFA; disulfide-linked. The PDGFB homodimer interacts with PDGFRA and PDGFRB homodimers, and with heterodimers formed by PDGFRA and PDGFRB. The heterodimer composed of PDGFA and PDGFB interacts with PDGFRB homodimers, and with heterodimers formed by PDGFRA and PDGFRB. Interacts with XLKD1. Interacts with LRP1. Interacts with SORL1 (via the N-terminal ectodomain). Interacts with CD82; this interaction inhibits PDGFB-mediated signaling pathway.

Its subcellular location is the secreted. Its function is as follows. Growth factor that plays an essential role in the regulation of embryonic development, cell proliferation, cell migration, survival and chemotaxis. Potent mitogen for cells of mesenchymal origin. Required for normal proliferation and recruitment of pericytes and vascular smooth muscle cells in the central nervous system, skin, lung, heart and placenta. Required for normal blood vessel development, and for normal development of kidney glomeruli. Plays an important role in wound healing. Signaling is modulated by the formation of heterodimers with PDGFA. In Ovis aries (Sheep), this protein is Platelet-derived growth factor subunit B (PDGFB).